Here is a 344-residue protein sequence, read N- to C-terminus: S-adenosylmethionine:tRNA ribosyltransferase-isomerase (344 aa).

The protein belongs to the QueA family. Monomer.

The protein resides in the cytoplasm. It catalyses the reaction 7-aminomethyl-7-carbaguanosine(34) in tRNA + S-adenosyl-L-methionine = epoxyqueuosine(34) in tRNA + adenine + L-methionine + 2 H(+). The protein operates within tRNA modification; tRNA-queuosine biosynthesis. Its function is as follows. Transfers and isomerizes the ribose moiety from AdoMet to the 7-aminomethyl group of 7-deazaguanine (preQ1-tRNA) to give epoxyqueuosine (oQ-tRNA). In Levilactobacillus brevis (strain ATCC 367 / BCRC 12310 / CIP 105137 / JCM 1170 / LMG 11437 / NCIMB 947 / NCTC 947) (Lactobacillus brevis), this protein is S-adenosylmethionine:tRNA ribosyltransferase-isomerase.